The primary structure comprises 109 residues: N-cym protein (109 aa).

In terms of assembly, interacts with MYCN and GSK3B. In terms of tissue distribution, expressed in the neuronal cells of the cerebrum and cerebellum, spermatocytes of the testis, pancreatic cells and also the heart. Expressed in both primary and metastatic neuroblastomas and in thyroid tumors (at protein level). Expression is associated with poor prognosis in neuroblastoma. Expressed in the fetal brain, lung, liver and kidney at varying low levels.

It is found in the cytoplasm. The protein localises to the nucleus. Functionally, regulates stability of MYCN in neuroblastoma cells by inhibiting GSK3B-mediated MYCN phosphorylation. Inhibits GSK3B activity by promoting its phosphorylation at 'Ser-9'. The chain is N-cym protein (MYCNOS) from Homo sapiens (Human).